Here is a 381-residue protein sequence, read N- to C-terminus: Chymosin (381 aa).

Positions 1–16 are cleaved as a signal peptide; that stretch reads MRCLVVLLAVFALSQG. Residues 17–58 constitute a propeptide, activation peptide; it reads AEITRIPLYKGKPLRKALKERGLLEDFLQKQQYGVSSEYSGF. A Peptidase A1 domain is found at 74–378; the sequence is YFGKIYLGTP…DRANNLVGLA (305 aa). D92 is a catalytic residue. 2 disulfide bridges follow: C105–C110 and C265–C269. Residue D274 is part of the active site. C308 and C341 form a disulfide bridge.

This sequence belongs to the peptidase A1 family. In terms of assembly, monomer.

The catalysed reaction is Broad specificity similar to that of pepsin A. Clots milk by cleavage of a single 104-Ser-Phe-|-Met-Ala-107 bond in kappa-chain of casein.. Functionally, chymosin is synthesized in the mucosa of the stomach. The enzyme hydrolyzes casein to paracasein. The polypeptide is Chymosin (CYM) (Ovis aries (Sheep)).